Reading from the N-terminus, the 130-residue chain is S-adenosylmethionine decarboxylase proenzyme (130 aa).

Catalysis depends on S63, which acts as the Schiff-base intermediate with substrate; via pyruvic acid. A Pyruvic acid (Ser); by autocatalysis modification is found at S63. H68 functions as the Proton acceptor; for processing activity in the catalytic mechanism. Residue C83 is the Proton donor; for catalytic activity of the active site.

The protein belongs to the prokaryotic AdoMetDC family. Type 1 subfamily. Heterotetramer of two alpha and two beta chains arranged as a dimer of alpha/beta heterodimers. Requires pyruvate as cofactor. In terms of processing, is synthesized initially as an inactive proenzyme. Formation of the active enzyme involves a self-maturation process in which the active site pyruvoyl group is generated from an internal serine residue via an autocatalytic post-translational modification. Two non-identical subunits are generated from the proenzyme in this reaction, and the pyruvate is formed at the N-terminus of the alpha chain, which is derived from the carboxyl end of the proenzyme. The post-translation cleavage follows an unusual pathway, termed non-hydrolytic serinolysis, in which the side chain hydroxyl group of the serine supplies its oxygen atom to form the C-terminus of the beta chain, while the remainder of the serine residue undergoes an oxidative deamination to produce ammonia and the pyruvoyl group blocking the N-terminus of the alpha chain.

It catalyses the reaction S-adenosyl-L-methionine + H(+) = S-adenosyl 3-(methylsulfanyl)propylamine + CO2. Its pathway is amine and polyamine biosynthesis; S-adenosylmethioninamine biosynthesis; S-adenosylmethioninamine from S-adenosyl-L-methionine: step 1/1. Catalyzes the decarboxylation of S-adenosylmethionine to S-adenosylmethioninamine (dcAdoMet), the propylamine donor required for the synthesis of the polyamines spermine and spermidine from the diamine putrescine. This Thermosipho melanesiensis (strain DSM 12029 / CIP 104789 / BI429) protein is S-adenosylmethionine decarboxylase proenzyme.